The chain runs to 580 residues: XK-related protein 7 (580 aa).

Residues Met1–Ala22 are compositionally biased toward low complexity. Residues Met1 to Gly28 form a disordered region. The next 8 membrane-spanning stretches (helical) occupy residues Trp59–Ala79, Tyr89–Phe109, Leu260–Tyr280, Val303–Val323, Leu326–Gly346, Trp355–Val375, Val384–Ser404, and Leu415–Tyr435. Positions Thr470–Pro516 are disordered.

Belongs to the XK family.

The protein localises to the cell membrane. This Rattus norvegicus (Rat) protein is XK-related protein 7.